We begin with the raw amino-acid sequence, 135 residues long: Retinol-binding protein 1 (135 aa).

Residues 22–32 (RALDVNVALRK) are important for interaction with STRA6. All-trans-retinol-binding residues include Lys41, Met63, and Gln109.

Belongs to the calycin superfamily. Fatty-acid binding protein (FABP) family. As to quaternary structure, interacts (only as retinol-free apoprotein) with STRA6.

The protein localises to the cytoplasm. Its subcellular location is the lipid droplet. Functionally, cytoplasmic retinol-binding protein. Accepts retinol from the transport protein STRA6, and thereby contributes to retinol uptake, storage and retinoid homeostasis. The sequence is that of Retinol-binding protein 1 (Rbp1) from Mus musculus (Mouse).